The following is a 145-amino-acid chain: Putative pre-16S rRNA nuclease (145 aa).

Belongs to the YqgF nuclease family.

It localises to the cytoplasm. Functionally, could be a nuclease involved in processing of the 5'-end of pre-16S rRNA. In Prochlorococcus marinus (strain MIT 9211), this protein is Putative pre-16S rRNA nuclease.